Reading from the N-terminus, the 372-residue chain is NAD(P)H-quinone oxidoreductase subunit 1 (372 aa).

The next 8 helical transmembrane spans lie at 27–47 (LIWL…GVLV), 97–117 (LLFT…WLIV), 128–148 (VGVG…GLLM), 166–186 (AAQS…VVMM), 204–224 (ILSW…ICAL), 266–286 (VLSA…PVPV), 308–328 (ATGI…AILL), and 347–367 (FLLP…LAFP).

It belongs to the complex I subunit 1 family. In terms of assembly, NDH-1 is composed of at least 11 different subunits.

It localises to the cellular thylakoid membrane. The catalysed reaction is a plastoquinone + NADH + (n+1) H(+)(in) = a plastoquinol + NAD(+) + n H(+)(out). It catalyses the reaction a plastoquinone + NADPH + (n+1) H(+)(in) = a plastoquinol + NADP(+) + n H(+)(out). In terms of biological role, NDH-1 shuttles electrons from an unknown electron donor, via FMN and iron-sulfur (Fe-S) centers, to quinones in the respiratory and/or the photosynthetic chain. The immediate electron acceptor for the enzyme in this species is believed to be plastoquinone. Couples the redox reaction to proton translocation, and thus conserves the redox energy in a proton gradient. This is NAD(P)H-quinone oxidoreductase subunit 1 from Synechococcus sp. (strain WH7803).